The sequence spans 224 residues: MKFLSVLSLAITLAAAAPVEVETGVALETRQSSTRNELETGSSSACPKVIYIFARASTEPGNMGISAGPIVADALERIYGANNVWVQGVGGPYLADLASNFLPDGTSSAAINEARRLFTLANTKCPNAAIVSGGYSQGTAVMAGSISGLSTTIKNQIKGVVLFGYTKNLQNLGRIPNFETSKTEVYCDIADAVCYGTLFILPAHFLYQTDAAVAAPRFLQARIG.

The N-terminal stretch at methionine 1–alanine 16 is a signal peptide. Cysteine 46 and cysteine 125 are disulfide-bonded. Serine 136 (nucleophile) is an active-site residue. Cysteines 187 and 194 form a disulfide. Residue aspartate 191 is part of the active site. Histidine 204 functions as the Proton donor/acceptor in the catalytic mechanism.

It belongs to the cutinase family. In terms of processing, the 2 disulfide bonds play a critical role in holding the catalytic residues in juxta-position; reduction of the disulfide bridges results in the complete inactivation of the enzyme. Post-translationally, the N-terminus is blocked.

The protein localises to the secreted. It catalyses the reaction cutin + H2O = cutin monomers.. Its activity is regulated as follows. Inhibited by diisopropyl fluorophosphate (DFP). In terms of biological role, catalyzes the hydrolysis of complex carboxylic polyesters found in the cell wall of plants. Degrades cutin, a macromolecule that forms the structure of the plant cuticle. Allows pathogenic fungi to penetrate through the cuticular barrier into the host plant during the initial stage of fungal infection. This Colletotrichum gloeosporioides (Anthracnose fungus) protein is Cutinase 1 (CUTA).